Here is a 158-residue protein sequence, read N- to C-terminus: MTDRIPMTPEGYEKLKEELDRLIKIERPAIIKAIAEARAHGDLSENAEYHAAREKQSFIEGRIQELQAKLARAYVIDPSKINQNKVAFGAKVRVIDIDTEEEKEFHLVGPDEADVKNGKISITSPVGKALIGKEVGEQVTIKAPAKTFNYEIISISFE.

Positions 47–73 (AEYHAAREKQSFIEGRIQELQAKLARA) form a coiled coil.

This sequence belongs to the GreA/GreB family.

Necessary for efficient RNA polymerase transcription elongation past template-encoded arresting sites. The arresting sites in DNA have the property of trapping a certain fraction of elongating RNA polymerases that pass through, resulting in locked ternary complexes. Cleavage of the nascent transcript by cleavage factors such as GreA or GreB allows the resumption of elongation from the new 3'terminus. GreA releases sequences of 2 to 3 nucleotides. This Thermodesulfovibrio yellowstonii (strain ATCC 51303 / DSM 11347 / YP87) protein is Transcription elongation factor GreA.